The chain runs to 320 residues: Transcription factor bHLH96 (320 aa).

Residues 30–121 (EEEDQDPQDT…RSSKNKEEIE (92 aa)) form a disordered region. The span at 65–76 (YSDDYNYNEEDL) shows a compositional bias: acidic residues. The span at 104–114 (GRRKRRRTRSS) shows a compositional bias: basic residues. The bHLH domain maps to 122–173 (NQRMTHIAVERNRRKQMNEYLAVLRSLMPPYYAQRGDQASIVGGAINYLKEL). A disordered region spans residues 184–206 (VKTATEDTGAGHDQTKTTSASSS). In terms of domain architecture, ACT spans 244–320 (SLKILAKKRP…RRIEEESSFS (77 aa)).

In terms of assembly, homodimer. Expressed constitutively in roots, leaves, stems, and flowers.

The protein localises to the nucleus. The chain is Transcription factor bHLH96 (BHLH96) from Arabidopsis thaliana (Mouse-ear cress).